The following is a 465-amino-acid chain: MGAMMVMMGLLLIIVSLCSALLRWNQMRYTKNGLPPGTMGWPIFGETTEFLKQGPNFMRNQRLRYGSFFKSHLLGCPTLISMDSEVNRYILKNESKGLVPGYPQSMLDILGTCNMAAVHGSSHRLMRGSLLSLISSTMMRDHILPKVDHFMRSYLDQWNELEVIDIQDKTKHMAFLSSLTQIAGNLRKPFVEEFKTAFFKLVVGTLSVPIDLPGTNYRCGIQARNNIDRLLRELMQERRDSGETFTDMLGYLMKKEGNRYPLTDEEIRDQVVTILYSGYETVSTTSMMALKYLHDHPKALQELRAEHLAFRERKRQDEPLGLEDVKSMKFTRAVIYETSRLATIVNGVLRKTTRDLEINGYLIPKGWRIYVYTREINYDANLYEDPLIFNPWRWMKKSLESQNSCFVFGGGTRLCPGKELGIVEISSFLHYFVTRYRWEEIGGDELMVFPRVFAPKGFHLRISPY.

The helical transmembrane segment at 2–22 (GAMMVMMGLLLIIVSLCSALL) threads the bilayer. Cysteine 415 serves as a coordination point for heme.

It belongs to the cytochrome P450 family. Requires heme as cofactor. As to expression, mainly expressed in apical shoots, hypocotyls, siliques and roots. Also present in the female gametophyte.

It localises to the membrane. The enzyme catalyses 6-deoxoteasterone + reduced [NADPH--hemoprotein reductase] + O2 = 6alpha-hydroxyteasterone + oxidized [NADPH--hemoprotein reductase] + H2O + H(+). The catalysed reaction is 6alpha-hydroxytyphasterol + reduced [NADPH--hemoprotein reductase] + O2 = teasterone + oxidized [NADPH--hemoprotein reductase] + 2 H2O + H(+). It carries out the reaction 3-dehydro-6-deoxoteasterone + reduced [NADPH--hemoprotein reductase] + O2 = 3-dehydro-6alpha-hydroxyteasterone + oxidized [NADPH--hemoprotein reductase] + H2O + H(+). It catalyses the reaction 3-dehydro-6alpha-hydroxyteasterone + reduced [NADPH--hemoprotein reductase] + O2 = 3-dehydroteasterone + oxidized [NADPH--hemoprotein reductase] + 2 H2O + H(+). The enzyme catalyses 6-deoxotyphasterol + reduced [NADPH--hemoprotein reductase] + O2 = 6alpha-hydroxytyphasterol + oxidized [NADPH--hemoprotein reductase] + H2O + H(+). The catalysed reaction is 6alpha-hydroxytyphasterol + reduced [NADPH--hemoprotein reductase] + O2 = typhasterol + oxidized [NADPH--hemoprotein reductase] + 2 H2O + H(+). It carries out the reaction 6-deoxocastasterone + reduced [NADPH--hemoprotein reductase] + O2 = 6alpha-hydroxycastasterone + oxidized [NADPH--hemoprotein reductase] + H2O + H(+). It catalyses the reaction 6alpha-hydroxycastasterone + reduced [NADPH--hemoprotein reductase] + O2 = castasterone + oxidized [NADPH--hemoprotein reductase] + 2 H2O + H(+). The enzyme catalyses 6-deoxocastasterone + 2 reduced [NADPH--hemoprotein reductase] + 2 O2 = castasterone + 2 oxidized [NADPH--hemoprotein reductase] + 3 H2O + 2 H(+). The catalysed reaction is 6-deoxoteasterone + 2 reduced [NADPH--hemoprotein reductase] + 2 O2 = teasterone + 2 oxidized [NADPH--hemoprotein reductase] + 3 H2O + 2 H(+). It carries out the reaction 6-deoxotyphasterol + 2 reduced [NADPH--hemoprotein reductase] + 2 O2 = typhasterol + 2 oxidized [NADPH--hemoprotein reductase] + 3 H2O + 2 H(+). It catalyses the reaction 3-dehydro-6-deoxoteasterone + 2 reduced [NADPH--hemoprotein reductase] + 2 O2 = 3-dehydroteasterone + 2 oxidized [NADPH--hemoprotein reductase] + 3 H2O + 2 H(+). Its pathway is plant hormone biosynthesis; brassinosteroid biosynthesis. Its function is as follows. Catalyzes the C6-oxidation step in brassinosteroids biosynthesis. Converts 6-deoxocastasterone (6-deoxoCS) to castasterone (CS). May also convert 6-deoxoteasterone (6-deoxoTE) to teasterone (TE), 3-dehydro-6-deoxoteasterone (6-deoxo3DT, 6-deoxo-3-DHT) to 3-dehydroteasterone (3DT, 3-DHT), and 6-deoxotyphasterol (6-deoxoTY) to typhasterol (TY). Required for the initiation of female gametogenesis (megagametogenesis). The chain is Cytochrome P450 85A1 from Arabidopsis thaliana (Mouse-ear cress).